The sequence spans 121 residues: Large ribosomal subunit protein bL19 (121 aa).

It belongs to the bacterial ribosomal protein bL19 family.

Functionally, this protein is located at the 30S-50S ribosomal subunit interface and may play a role in the structure and function of the aminoacyl-tRNA binding site. This Chlamydia muridarum (strain MoPn / Nigg) protein is Large ribosomal subunit protein bL19 (rplS).